Here is a 783-residue protein sequence, read N- to C-terminus: Glucosidase YgjK (783 aa).

The N-terminal stretch at 1-22 (MKIKTILTPVTCALLISFSAHA) is a signal peptide. The interval 24-254 (NADNYKNVIN…TTLYTTYSHL (231 aa)) is N-terminal domain. Positions 254-299 (LLTAQEVSKEQMQIRDILARPAFYLTASQQRWEEYLKKGLTNPDAT) are linker. The a domain stretch occupies residues 300–783 (PEQTRVAVKA…MLYNDFFRKQ (484 aa)). Residues aspartate 454, asparagine 456, asparagine 458, valine 460, and glutamate 462 each coordinate Ca(2+). Aspartate 524 acts as the Proton donor in catalysis. Glutamate 572 lines the Ca(2+) pocket. Glutamate 750 functions as the Proton acceptor in the catalytic mechanism.

Belongs to the glycosyl hydrolase 63 family.

Its function is as follows. Glucoside hydrolase that cleaves the alpha-1,3-glucosidic linkage in nigerose. Has very low activity towards maltooligosaccharides, soluble starch, nigerotriose, kojibiose and trehalose. The sequence is that of Glucosidase YgjK (ygjK) from Escherichia coli (strain K12).